Here is a 27-residue protein sequence, read N- to C-terminus: L-amino-acid oxidase (27 aa).

In terms of assembly, homodimer; non-covalently linked. FAD is required as a cofactor. In terms of processing, contains 2 disulfide bonds. Post-translationally, N-glycosylated. In terms of tissue distribution, expressed by the venom gland.

The protein resides in the secreted. The catalysed reaction is an L-alpha-amino acid + O2 + H2O = a 2-oxocarboxylate + H2O2 + NH4(+). The enzyme catalyses L-leucine + O2 + H2O = 4-methyl-2-oxopentanoate + H2O2 + NH4(+). In terms of biological role, catalyzes an oxidative deamination of predominantly hydrophobic and aromatic L-amino acids, thus producing hydrogen peroxide that may contribute to the diverse toxic effects of this enzyme. Shows activity on L-Leu. Exhibits diverse biological activities, such as hemolysis, edema, apoptosis, as well as induction of platelet aggregation. Effects of snake L-amino oxidases on platelets are controversial, since they either induce aggregation or inhibit agonist-induced aggregation. These different effects are probably due to different experimental conditions. Unlike other snake venom L-amino acid oxidases, does not induce hemorrhage. This protein may also have antibacterial and antiparasitic activities. This Eristicophis macmahoni (Leaf-nosed viper) protein is L-amino-acid oxidase.